A 490-amino-acid polypeptide reads, in one-letter code: Ribulose bisphosphate carboxylase large chain (490 aa).

Substrate-binding residues include asparagine 127 and threonine 177. The active-site Proton acceptor is the lysine 179. Position 181 (lysine 181) interacts with substrate. Residues lysine 205, aspartate 207, and glutamate 208 each contribute to the Mg(2+) site. Position 205 is an N6-carboxylysine (lysine 205). Residue histidine 297 is the Proton acceptor of the active site. Residues arginine 298, histidine 330, and serine 382 each contribute to the substrate site.

It belongs to the RuBisCO large chain family. Type I subfamily. In terms of assembly, heterohexadecamer of 8 large chains and 8 small chains. Mg(2+) is required as a cofactor.

The protein resides in the plastid. It localises to the chloroplast. The enzyme catalyses 2 (2R)-3-phosphoglycerate + 2 H(+) = D-ribulose 1,5-bisphosphate + CO2 + H2O. The catalysed reaction is D-ribulose 1,5-bisphosphate + O2 = 2-phosphoglycolate + (2R)-3-phosphoglycerate + 2 H(+). RuBisCO catalyzes two reactions: the carboxylation of D-ribulose 1,5-bisphosphate, the primary event in carbon dioxide fixation, as well as the oxidative fragmentation of the pentose substrate in the photorespiration process. Both reactions occur simultaneously and in competition at the same active site. The sequence is that of Ribulose bisphosphate carboxylase large chain from Cylindrotheca sp. (strain N1) (Marine diatom).